The primary structure comprises 226 residues: ATP-dependent dethiobiotin synthetase BioD (226 aa).

An ATP-binding site is contributed by 12–17; the sequence is GIGKTV. Position 16 (Thr-16) interacts with Mg(2+). The active site involves Lys-37. Thr-41 contacts substrate. Residues Asp-49, 108–111, 169–170, and 197–199 contribute to the ATP site; these read EGAG, GS, and PAG. Residues Asp-49 and Glu-108 each contribute to the Mg(2+) site.

This sequence belongs to the dethiobiotin synthetase family. As to quaternary structure, homodimer. The cofactor is Mg(2+).

It localises to the cytoplasm. It catalyses the reaction (7R,8S)-7,8-diammoniononanoate + CO2 + ATP = (4R,5S)-dethiobiotin + ADP + phosphate + 3 H(+). Its pathway is cofactor biosynthesis; biotin biosynthesis; biotin from 7,8-diaminononanoate: step 1/2. Functionally, catalyzes a mechanistically unusual reaction, the ATP-dependent insertion of CO2 between the N7 and N8 nitrogen atoms of 7,8-diaminopelargonic acid (DAPA, also called 7,8-diammoniononanoate) to form a ureido ring. In Mycolicibacterium gilvum (strain PYR-GCK) (Mycobacterium gilvum (strain PYR-GCK)), this protein is ATP-dependent dethiobiotin synthetase BioD.